A 101-amino-acid chain; its full sequence is Small ribosomal subunit protein uS14 (101 aa).

Belongs to the universal ribosomal protein uS14 family. In terms of assembly, part of the 30S ribosomal subunit. Contacts proteins S3 and S10.

Functionally, binds 16S rRNA, required for the assembly of 30S particles and may also be responsible for determining the conformation of the 16S rRNA at the A site. This is Small ribosomal subunit protein uS14 from Escherichia coli O139:H28 (strain E24377A / ETEC).